The primary structure comprises 165 residues: REP-associated tyrosine transposase (165 aa).

Belongs to the transposase 17 family. RAYT subfamily. As to quaternary structure, monomer.

With respect to regulation, cleavage occurs in the presence of magnesium, but is much more pronounced with manganese. In terms of biological role, transposase that is always flanked by repeated extragenic palindrome (REP) sequences, which are clustered in structures called bacterial interspersed mosaic elements (BIMEs). RayT catalyzes cleavage and recombination of BIMEs. Binds REP sequences and cleaves BIMEs both upstream and downstream of the REP sequence. Could be important in the creation of BIME variability and amplification. This is REP-associated tyrosine transposase from Escherichia coli (strain K12).